The primary structure comprises 49 residues: Large ribosomal subunit protein bL33 (49 aa).

Belongs to the bacterial ribosomal protein bL33 family.

This is Large ribosomal subunit protein bL33 from Carboxydothermus hydrogenoformans (strain ATCC BAA-161 / DSM 6008 / Z-2901).